The primary structure comprises 85 residues: U4-theraphotoxin-Hhn1o (85 aa).

The N-terminal stretch at 1-22 (MKVTLIAILTCAAVLVLHTTAA) is a signal peptide. The propeptide occupies 23–48 (EELEAESQLMEVGMPDTELAAVDEER). 3 cysteine pairs are disulfide-bonded: Cys52–Cys66, Cys56–Cys77, and Cys71–Cys82.

This sequence belongs to the neurotoxin 12 (Hwtx-2) family. 02 (Hwtx-2) subfamily. In terms of tissue distribution, expressed by the venom gland.

The protein resides in the secreted. Its function is as follows. Postsynaptic neurotoxin. The chain is U4-theraphotoxin-Hhn1o from Cyriopagopus hainanus (Chinese bird spider).